Here is a 522-residue protein sequence, read N- to C-terminus: Mediator of RNA polymerase II transcription subunit 1.2 (522 aa).

The stretch at 13–40 (LLEQRKNQELNIEHIDEEMRLEQVRQAA) forms a coiled coil.

The protein belongs to the Mediator complex subunit 1 family. In terms of assembly, component of the Mediator complex.

Its subcellular location is the nucleus. Its function is as follows. Component of the Mediator complex, a coactivator involved in the regulated transcription of nearly all RNA polymerase II-dependent genes. Mediator functions as a bridge to convey information from gene-specific regulatory proteins to the basal RNA polymerase II transcription machinery. Mediator is recruited to promoters by direct interactions with regulatory proteins and serves as a scaffold for the assembly of a functional preinitiation complex with RNA polymerase II and the general transcription factors. The chain is Mediator of RNA polymerase II transcription subunit 1.2 (mdt-1.2) from Caenorhabditis elegans.